We begin with the raw amino-acid sequence, 119 residues long: Protein BEX4 (119 aa).

A disordered region spans residues 1–53 (MESKEELAANNLNGENAQQENEGREQAPTQNEETRHLGGGEGQKPGGNIRRGR). Low complexity predominate over residues 8-20 (AANNLNGENAQQE). The segment at 31-89 (NEETRHLGGGEGQKPGGNIRRGRVRRLVPNFRWAIPNRHIEHNEARDDVERFVGQMMEI) is interaction with SIRT2. The interval 31–119 (NEETRHLGGG…DNHYDFCLIP (89 aa)) is interaction with alpha-tubulin. Cys-116 contributes to the Zn(2+) binding site.

The protein belongs to the BEX family. In terms of assembly, interacts with alpha-tubulin. Interacts with SIRT2. Post-translationally, ubiquitinated and degraded by the proteasome.

It is found in the cytoplasm. It localises to the cytoskeleton. The protein localises to the spindle pole. Its subcellular location is the nucleus. Its function is as follows. May play a role in microtubule deacetylation by negatively regulating the SIRT2 deacetylase activity toward alpha-tubulin and thereby participate in the control of cell cycle progression and genomic stability. In absence of reductive stress, acts as a pseudosubstrate for the CRL2(FEM1B) complex: associates with FEM1B via zinc, thereby preventing association between FEM1B and its substrates. This Pongo abelii (Sumatran orangutan) protein is Protein BEX4.